A 275-amino-acid polypeptide reads, in one-letter code: MKLKGEAVLITGGASGLGRALVDRFVAEAKVAVLDKSAERLAELETDLGDNVLGIVGDVRSLEDQKQAASRCVARFGKIDTLIPNAGIWDYSTALVDLPEESLDAAFDEVFHINVKGYIHAVKALPALVASRGNVIFTISNAGFYPNGGGPLYTAAKQAIVGLVRELAFELAPYVRVNGVGPGGMNSDMRGPSSLGMGSKAISTVPLADMLKSVLPIGRMPEVEEYTGAYVFFATRGDAAPASGALVNYDGGLGVRGFFSGAGGNDLLEQLNIHP.

9-33 (LITGGASGLGRALVDRFVAEAKVAV) provides a ligand contact to NAD(+). Serine 140 is a substrate binding site. Tyrosine 153 functions as the Proton acceptor in the catalytic mechanism.

It belongs to the short-chain dehydrogenases/reductases (SDR) family.

It carries out the reaction (2R,3S)-3-phenylcyclohexa-3,5-diene-1,2-diol + NAD(+) = biphenyl-2,3-diol + NADH + H(+). The protein operates within xenobiotic degradation; biphenyl degradation; 2-hydroxy-2,4-pentadienoate and benzoate from biphenyl: step 2/4. The protein is Cis-2,3-dihydrobiphenyl-2,3-diol dehydrogenase (bphB) of Metapseudomonas furukawaii (Pseudomonas furukawaii).